Reading from the N-terminus, the 89-residue chain is Protein FAM25A (89 aa).

Belongs to the FAM25 family.

The protein is Protein FAM25A of Homo sapiens (Human).